Here is a 149-residue protein sequence, read N- to C-terminus: Calmodulin (149 aa).

Residue alanine 2 is modified to N-acetylalanine. EF-hand domains are found at residues 8-43, 44-79, 81-116, and 117-149; these read EQVS…LGQN, PSES…KMKD, DSEE…IGEK, and LTDD…MMQK. 19 residues coordinate Ca(2+): aspartate 21, aspartate 23, aspartate 25, glutamine 27, glutamate 32, aspartate 57, aspartate 59, asparagine 61, threonine 63, glutamate 68, aspartate 94, aspartate 96, asparagine 98, glutamate 105, aspartate 130, aspartate 132, aspartate 134, arginine 136, and glutamate 141.

Belongs to the calmodulin family.

Calmodulin mediates the control of a large number of enzymes, ion channels and other proteins by Ca(2+). Among the enzymes to be stimulated by the calmodulin-Ca(2+) complex are a number of protein kinases and phosphatases. This chain is Calmodulin, found in Colletotrichum gloeosporioides (Anthracnose fungus).